Consider the following 1487-residue polypeptide: Golgin subfamily A member 3 (1487 aa).

Residue Met-1 is modified to N-acetylmethionine. The interval 1 to 118 (MDGASAKQDG…GTSAEGSVRK (118 aa)) is disordered. Ser-18 and Ser-60 each carry phosphoserine. Residues 62 to 74 (DRSSQVAICQNGQ) show a composition bias toward polar residues. An interaction with GOPC region spans residues 121–141 (LQSLRLSLPMQETQLCSTASS). The tract at residues 172 to 257 (ERSSQPATKM…DYRTEDPSDS (86 aa)) is golgi-targeting domain. Disordered regions lie at residues 221-321 (PKVG…SSLS) and 365-394 (AAQH…SMES). 3 stretches are compositionally biased toward low complexity: residues 269–288 (SSLK…SPSS), 312–321 (SDSSSHSSLS), and 365–375 (AAQHQDQNQEA). Position 270 is a phosphoserine (Ser-270). Positions 358 to 1454 (KDVLQAAAAQ…TITVHESLSS (1097 aa)) form a coiled coil. Phosphoserine is present on residues Ser-381, Ser-385, and Ser-461. A compositionally biased stretch (basic and acidic residues) spans 785-796 (KEELDRGARRLE). The interval 785 to 804 (KEELDRGARRLEEDTEETSG) is disordered. Ser-979 carries the post-translational modification Phosphoserine. Residues 1372–1382 (RGAAKKKEPKG) show a composition bias toward basic and acidic residues. Disordered stretches follow at residues 1372-1396 (RGAA…IKIP) and 1458-1487 (VEAA…GLGQ). Ser-1387 carries the post-translational modification Phosphoserine. Over residues 1462–1474 (PAEHAHPRGDTKL) the composition is skewed to basic and acidic residues. Ser-1479 bears the Phosphoserine mark.

Homodimer. Interacts with GOLGA7. Interacts with GOPC. Post-translationally, cleaved by caspases in apoptotic cells. As to expression, highly expressed in testis. Transcripts can be found in spermatids during spermatogenesis. No expression in Leydig cells, spermatogonia or spermatocytes. Detected at low levels in all tissues.

The protein resides in the cytoplasm. It localises to the golgi apparatus. Its subcellular location is the golgi stack membrane. Functionally, plays an important role in spermatogenesis and/or testis development. Probably identical with the serologically detectable male antigen (SDM). Probably involved in maintaining Golgi structure. In Mus musculus (Mouse), this protein is Golgin subfamily A member 3 (Golga3).